A 575-amino-acid chain; its full sequence is Intermediate filament protein ifd-1 (575 aa).

A head region spans residues 1-56 (MSKLNPRVAHNPVLSRIIESGRTNLPSGITSAGSLSAYAQAAAVTIRDNRDREKRE). The IF rod domain maps to 53 to 406 (EKREIADLNN…KLMEQAENLR (354 aa)). Positions 57–88 (IADLNNRLARYVEKVRFLEAQNRVLENDIGLF) are coil 1A. The linker 1 stretch occupies residues 89–102 (RQAAHIHTGKVRDY). A coil 1B region spans residues 103 to 240 (YDAEKTSLAT…STHEIAIREE (138 aa)). The interval 241 to 258 (INKARRDSTDKNREFFHR) is linker 12. A coil 2 region spans residues 259–408 (ELHMSMKEIR…MEQAENLRTS (150 aa)). The tract at residues 409-572 (YQSDFVIDTP…DEVGWYAHVS (164 aa)) is tail. Residues 459 to 575 (NTQQFRSYGK…GWYAHVSYSH (117 aa)) form the LTD domain.

It belongs to the intermediate filament family.

Its subcellular location is the cytoplasm. In terms of biological role, cytoplasmic intermediate filaments provide mechanical strength to cells. Not essential protein. This chain is Intermediate filament protein ifd-1, found in Caenorhabditis elegans.